The following is a 223-amino-acid chain: Deoxyribose-phosphate aldolase (223 aa).

The active-site Proton donor/acceptor is D89. K154 acts as the Schiff-base intermediate with acetaldehyde in catalysis. Residue K183 is the Proton donor/acceptor of the active site.

This sequence belongs to the DeoC/FbaB aldolase family. DeoC type 1 subfamily.

It localises to the cytoplasm. It carries out the reaction 2-deoxy-D-ribose 5-phosphate = D-glyceraldehyde 3-phosphate + acetaldehyde. Its pathway is carbohydrate degradation; 2-deoxy-D-ribose 1-phosphate degradation; D-glyceraldehyde 3-phosphate and acetaldehyde from 2-deoxy-alpha-D-ribose 1-phosphate: step 2/2. Its function is as follows. Catalyzes a reversible aldol reaction between acetaldehyde and D-glyceraldehyde 3-phosphate to generate 2-deoxy-D-ribose 5-phosphate. This chain is Deoxyribose-phosphate aldolase, found in Thermoanaerobacter pseudethanolicus (strain ATCC 33223 / 39E) (Clostridium thermohydrosulfuricum).